The chain runs to 122 residues: Large ribosomal subunit protein uL14 (122 aa).

Belongs to the universal ribosomal protein uL14 family. In terms of assembly, part of the 50S ribosomal subunit. Forms a cluster with proteins L3 and L19. In the 70S ribosome, L14 and L19 interact and together make contacts with the 16S rRNA in bridges B5 and B8.

In terms of biological role, binds to 23S rRNA. Forms part of two intersubunit bridges in the 70S ribosome. This chain is Large ribosomal subunit protein uL14, found in Lactobacillus delbrueckii subsp. bulgaricus (strain ATCC BAA-365 / Lb-18).